We begin with the raw amino-acid sequence, 284 residues long: 4-hydroxybenzoate octaprenyltransferase (284 aa).

7 helical membrane-spanning segments follow: residues 13–32 (FNRPIGSFLLMWPTLWALWL), 90–110 (ALMLFCALSILSFILVLFTDL), 112–132 (TILLSFVGLGLAALYPFMKRY), 134–154 (HLPQLFLGLAFSWAIPMAYSA), 164–184 (LWMLFVANCFWTIAYDTYYAM), 200–220 (ILFGQYDLFVIICLQGLTLSL), and 224–244 (IGLLAGLHWLYFVSLIVCVGL).

This sequence belongs to the UbiA prenyltransferase family. Mg(2+) is required as a cofactor.

The protein localises to the cell inner membrane. It catalyses the reaction all-trans-octaprenyl diphosphate + 4-hydroxybenzoate = 4-hydroxy-3-(all-trans-octaprenyl)benzoate + diphosphate. It functions in the pathway cofactor biosynthesis; ubiquinone biosynthesis. Functionally, catalyzes the prenylation of para-hydroxybenzoate (PHB) with an all-trans polyprenyl group. Mediates the second step in the final reaction sequence of ubiquinone-8 (UQ-8) biosynthesis, which is the condensation of the polyisoprenoid side chain with PHB, generating the first membrane-bound Q intermediate 3-octaprenyl-4-hydroxybenzoate. The protein is 4-hydroxybenzoate octaprenyltransferase of Marinomonas sp. (strain MWYL1).